Here is a 317-residue protein sequence, read N- to C-terminus: Cytochrome c biogenesis protein CcsA (317 aa).

7 helical membrane-spanning segments follow: residues 13–35 (ISFSIIAIVITTHLMTLLVHEIV), 44–64 (GMIATFFCITGLLVTRWIYSG), 71–91 (LYESLMFLSWSFSLILMVPYF), 143–163 (MLLSYAALLCGSLLSIALLVI), 171–191 (MIGFTNHLLIWPFSFGEIKYL), 225–245 (VIGLGFTFSTIGILSGAVWAN), and 286–306 (AIVASMGFLIIWICYFGVNLL).

The protein belongs to the CcmF/CycK/Ccl1/NrfE/CcsA family. In terms of assembly, may interact with Ccs1.

The protein localises to the plastid. It is found in the chloroplast thylakoid membrane. Its function is as follows. Required during biogenesis of c-type cytochromes (cytochrome c6 and cytochrome f) at the step of heme attachment. This is Cytochrome c biogenesis protein CcsA from Illicium oligandrum (Star anise).